Here is a 518-residue protein sequence, read N- to C-terminus: 4-trimethylaminobutyraldehyde dehydrogenase B (518 aa).

NAD(+) is bound by residues Lys204 and 256–260; that span reads GSVPT. The active-site Proton acceptor is Glu278. Catalysis depends on Cys312, which acts as the Nucleophile. Glu415 serves as a coordination point for NAD(+).

Belongs to the aldehyde dehydrogenase family. As to quaternary structure, homotetramer.

It is found in the cytoplasm. Its subcellular location is the cytosol. It catalyses the reaction 4-(trimethylamino)butanal + NAD(+) + H2O = 4-(trimethylamino)butanoate + NADH + 2 H(+). It carries out the reaction an aldehyde + NAD(+) + H2O = a carboxylate + NADH + 2 H(+). It participates in amine and polyamine biosynthesis; carnitine biosynthesis. In terms of biological role, converts gamma-trimethylaminobutyraldehyde into gamma-butyrobetaine with high efficiency (in vitro). Can catalyze the irreversible oxidation of a broad range of aldehydes to the corresponding acids in an NAD-dependent reaction, but with low efficiency. In Danio rerio (Zebrafish), this protein is 4-trimethylaminobutyraldehyde dehydrogenase B (aldh9a1b).